A 321-amino-acid chain; its full sequence is Cytochrome f (321 aa).

The signal sequence occupies residues 1 to 35 (MQNRKTYDDWVKKWITQSISVLIMIDIMTRTSIAN). 4 residues coordinate heme: tyrosine 37, cysteine 57, cysteine 60, and histidine 61. A helical membrane pass occupies residues 287-307 (VQGLLLFLASVVLAQIFLVLK).

It belongs to the cytochrome f family. The 4 large subunits of the cytochrome b6-f complex are cytochrome b6, subunit IV (17 kDa polypeptide, petD), cytochrome f and the Rieske protein, while the 4 small subunits are PetG, PetL, PetM and PetN. The complex functions as a dimer. It depends on heme as a cofactor.

The protein localises to the plastid. Its subcellular location is the chloroplast thylakoid membrane. Functionally, component of the cytochrome b6-f complex, which mediates electron transfer between photosystem II (PSII) and photosystem I (PSI), cyclic electron flow around PSI, and state transitions. The sequence is that of Cytochrome f from Cryptomeria japonica (Japanese cedar).